We begin with the raw amino-acid sequence, 306 residues long: MAGRYDSNPFEEDDVNPFSEQARGKAGGQPSYGGGAFYMPNPRNVPSVSSNSRLSPLPPEPAAFGATVDIPLDSSKDLKNREKELQAREAELNKREKELKRREEAAARAGIVIEEKNWPPFLPLIHHDITNEIPSHLQRMQYVAFASFLGLACCLFWNVIAVTSAWVKGEGVKIWLLAIIYFISGVPGAYVLWYRPLYNAMRTDSALKFGLFFLVYLFHILFCVFSAVAPPVVFEGKSLAGILPAIDLISKNALVGIFYFVGFGLFCVESLLSIWVIQQVYMYFRGSGKAAEMKRDATRGAMRAAF.

The tract at residues 1–66 (MAGRYDSNPF…LPPEPAAFGA (66 aa)) is disordered. Over 1–141 (MAGRYDSNPF…EIPSHLQRMQ (141 aa)) the chain is Cytoplasmic. Gly residues predominate over residues 25–36 (KAGGQPSYGGGA). Low complexity predominate over residues 40 to 55 (PNPRNVPSVSSNSRLS). The stretch at 72 to 109 (LDSSKDLKNREKELQAREAELNKREKELKRREEAAARA) forms a coiled coil. 4 helical membrane-spanning segments follow: residues 142–162 (YVAF…VIAV), 174–194 (IWLL…VLWY), 209–229 (FGLF…SAVA), and 257–277 (IFYF…IWVI). The Cytoplasmic segment spans residues 278-306 (QQVYMYFRGSGKAAEMKRDATRGAMRAAF).

Belongs to the SCAMP family.

The protein localises to the cell membrane. The protein resides in the cytoplasmic vesicle. It localises to the secretory vesicle membrane. Probably involved in membrane trafficking. This chain is Secretory carrier-associated membrane protein 1 (SCAMP1), found in Oryza sativa subsp. japonica (Rice).